A 373-amino-acid polypeptide reads, in one-letter code: Dual-specificity RNA methyltransferase RlmN (373 aa).

Catalysis depends on E94, which acts as the Proton acceptor. The region spanning E100 to D339 is the Radical SAM core domain. C107 and C344 form a disulfide bridge. The [4Fe-4S] cluster site is built by C114, C118, and C121. S-adenosyl-L-methionine is bound by residues G168–E169, S200, S222–H224, and N301. C344 (S-methylcysteine intermediate) is an active-site residue.

It belongs to the radical SAM superfamily. RlmN family. It depends on [4Fe-4S] cluster as a cofactor.

Its subcellular location is the cytoplasm. It catalyses the reaction adenosine(2503) in 23S rRNA + 2 reduced [2Fe-2S]-[ferredoxin] + 2 S-adenosyl-L-methionine = 2-methyladenosine(2503) in 23S rRNA + 5'-deoxyadenosine + L-methionine + 2 oxidized [2Fe-2S]-[ferredoxin] + S-adenosyl-L-homocysteine. The catalysed reaction is adenosine(37) in tRNA + 2 reduced [2Fe-2S]-[ferredoxin] + 2 S-adenosyl-L-methionine = 2-methyladenosine(37) in tRNA + 5'-deoxyadenosine + L-methionine + 2 oxidized [2Fe-2S]-[ferredoxin] + S-adenosyl-L-homocysteine. Its function is as follows. Specifically methylates position 2 of adenine 2503 in 23S rRNA and position 2 of adenine 37 in tRNAs. m2A2503 modification seems to play a crucial role in the proofreading step occurring at the peptidyl transferase center and thus would serve to optimize ribosomal fidelity. The sequence is that of Dual-specificity RNA methyltransferase RlmN from Vibrio cholerae serotype O1 (strain M66-2).